Reading from the N-terminus, the 187-residue chain is Dihydrofolate reductase 2, mitochondrial (187 aa).

The region spanning L4–K185 is the DHFR domain. Residues A10 and G16–D22 each bind NADP(+). Position 31-36 (E31–Q36) interacts with substrate. R55–T57 serves as a coordination point for NADP(+). Position 71 (R71) interacts with substrate. Residues S77 to E79 and G117 to E124 contribute to the NADP(+) site.

It belongs to the dihydrofolate reductase family. As to expression, expressed in numerous cell lines.

The protein localises to the mitochondrion. It localises to the mitochondrion matrix. The protein resides in the mitochondrion inner membrane. The enzyme catalyses (6S)-5,6,7,8-tetrahydrofolate + NADP(+) = 7,8-dihydrofolate + NADPH + H(+). It functions in the pathway cofactor biosynthesis; tetrahydrofolate biosynthesis; 5,6,7,8-tetrahydrofolate from 7,8-dihydrofolate: step 1/1. In terms of biological role, key enzyme in folate metabolism. Contributes to the de novo mitochondrial thymidylate biosynthesis pathway. Required to prevent uracil accumulation in mtDNA. Binds its own mRNA and that of DHFR. The sequence is that of Dihydrofolate reductase 2, mitochondrial from Homo sapiens (Human).